The primary structure comprises 524 residues: Peptide chain release factor 3 (524 aa).

The region spanning 11-278 is the tr-type G domain; it reads AKRRTFAIIS…SFVQYAPEPG (268 aa). GTP contacts are provided by residues 20-27, 88-92, and 142-145; these read SHPDAGKT, DTPGH, and NKLD.

Belongs to the TRAFAC class translation factor GTPase superfamily. Classic translation factor GTPase family. PrfC subfamily.

The protein resides in the cytoplasm. In terms of biological role, increases the formation of ribosomal termination complexes and stimulates activities of RF-1 and RF-2. It binds guanine nucleotides and has strong preference for UGA stop codons. It may interact directly with the ribosome. The stimulation of RF-1 and RF-2 is significantly reduced by GTP and GDP, but not by GMP. The protein is Peptide chain release factor 3 of Lacticaseibacillus casei (strain BL23) (Lactobacillus casei).